The primary structure comprises 468 residues: Protein phosphatase ppm-1.A (468 aa).

Positions 1 to 23 (MTISRADLQIASSAEPKTHGNLN) are disordered. A PPM-type phosphatase domain is found at 106 to 381 (RYGMSSMQGW…DNMTMVVVCF (276 aa)). Positions 145, 146, 329, and 372 each coordinate Mn(2+).

Belongs to the PP2C family. Mg(2+) is required as a cofactor. Requires Mn(2+) as cofactor. In terms of tissue distribution, expressed in neurons of the nerve ring and motor neurons of the ventral nerve cord.

Its subcellular location is the synapse. It catalyses the reaction O-phospho-L-seryl-[protein] + H2O = L-seryl-[protein] + phosphate. The catalysed reaction is O-phospho-L-threonyl-[protein] + H2O = L-threonyl-[protein] + phosphate. Functionally, probable phosphatase which regulates axon termination in ALM and PLM neurons, and synaptic branch extension and/or stabilization in PLM neurons. Plays a role in synapse formation in GABAergic DD motor neurons probably by dephosphorylating pmk-3 thereby negatively regulating a MAP kinase pathway that includes dlk-1, mkk-4 and pmk-3. The chain is Protein phosphatase ppm-1.A from Caenorhabditis elegans.